The following is a 553-amino-acid chain: uncharacterized protein (553 aa).

An N-terminal signal peptide occupies residues 1–31 (MEDIMTSLLVATSRVVVTISLAYVPVKSAFA). Residue serine 207 is the Acyl-ester intermediate of the active site. Cysteine 275 and cysteine 292 are oxidised to a cystine. 5 residues coordinate Ca(2+): aspartate 276, aspartate 279, valine 281, aspartate 283, and leucine 285. Active-site charge relay system residues include aspartate 444 and histidine 482. Residues cysteine 528 and cysteine 550 are joined by a disulfide bond.

It belongs to the tannase family.

This is an uncharacterized protein from Agrobacterium fabrum (strain C58 / ATCC 33970) (Agrobacterium tumefaciens (strain C58)).